Consider the following 230-residue polypeptide: Cytidylate kinase (230 aa).

16–24 (GPASAGKST) lines the ATP pocket.

The protein belongs to the cytidylate kinase family. Type 1 subfamily.

It localises to the cytoplasm. It carries out the reaction CMP + ATP = CDP + ADP. It catalyses the reaction dCMP + ATP = dCDP + ADP. This is Cytidylate kinase from Lactobacillus gasseri (strain ATCC 33323 / DSM 20243 / BCRC 14619 / CIP 102991 / JCM 1131 / KCTC 3163 / NCIMB 11718 / NCTC 13722 / AM63).